The sequence spans 328 residues: Formimidoylglutamase (328 aa).

H133, D159, H161, D163, D253, and D255 together coordinate Mn(2+).

It belongs to the arginase family. Mn(2+) is required as a cofactor.

It carries out the reaction N-formimidoyl-L-glutamate + H2O = formamide + L-glutamate. It functions in the pathway amino-acid degradation; L-histidine degradation into L-glutamate; L-glutamate from N-formimidoyl-L-glutamate (hydrolase route): step 1/1. Functionally, catalyzes the conversion of N-formimidoyl-L-glutamate to L-glutamate and formamide. The polypeptide is Formimidoylglutamase (Streptococcus pyogenes serotype M6 (strain ATCC BAA-946 / MGAS10394)).